Consider the following 440-residue polypeptide: Ribosomal protein uS12 methylthiotransferase RimO (440 aa).

The region spanning 8 to 125 (LRCHAISLGC…WNEQILLALN (118 aa)) is the MTTase N-terminal domain. [4Fe-4S] cluster is bound by residues cysteine 17, cysteine 52, cysteine 87, cysteine 152, cysteine 156, and cysteine 159. The region spanning 138–368 (TTGKSYAWLK…MEIQLKISEK (231 aa)) is the Radical SAM core domain. In terms of domain architecture, TRAM spans 371–439 (KNFVGKRLSL…SYDLVALADS (69 aa)).

The protein belongs to the methylthiotransferase family. RimO subfamily. [4Fe-4S] cluster serves as cofactor.

The protein resides in the cytoplasm. It catalyses the reaction L-aspartate(89)-[ribosomal protein uS12]-hydrogen + (sulfur carrier)-SH + AH2 + 2 S-adenosyl-L-methionine = 3-methylsulfanyl-L-aspartate(89)-[ribosomal protein uS12]-hydrogen + (sulfur carrier)-H + 5'-deoxyadenosine + L-methionine + A + S-adenosyl-L-homocysteine + 2 H(+). Catalyzes the methylthiolation of an aspartic acid residue of ribosomal protein uS12. In Lawsonia intracellularis (strain PHE/MN1-00), this protein is Ribosomal protein uS12 methylthiotransferase RimO.